A 231-amino-acid chain; its full sequence is Ribonuclease P protein component 3 (231 aa).

It belongs to the eukaryotic/archaeal RNase P protein component 3 family. Consists of a catalytic RNA component and at least 4-5 protein subunits.

Its subcellular location is the cytoplasm. The catalysed reaction is Endonucleolytic cleavage of RNA, removing 5'-extranucleotides from tRNA precursor.. Its function is as follows. Part of ribonuclease P, a protein complex that generates mature tRNA molecules by cleaving their 5'-ends. The chain is Ribonuclease P protein component 3 from Methanococcus maripaludis (strain C5 / ATCC BAA-1333).